The primary structure comprises 214 residues: Dephospho-CoA kinase (214 aa).

A DPCK domain is found at 20 to 214 (RIGITGGIAS…KLQLKKLYKF (195 aa)). 28–33 (ASGKTI) is an ATP binding site.

It belongs to the CoaE family.

The protein localises to the cytoplasm. The catalysed reaction is 3'-dephospho-CoA + ATP = ADP + CoA + H(+). It functions in the pathway cofactor biosynthesis; coenzyme A biosynthesis; CoA from (R)-pantothenate: step 5/5. Its function is as follows. Catalyzes the phosphorylation of the 3'-hydroxyl group of dephosphocoenzyme A to form coenzyme A. The sequence is that of Dephospho-CoA kinase from Prochlorococcus marinus (strain NATL2A).